A 223-amino-acid chain; its full sequence is Dephospho-CoA kinase (223 aa).

The DPCK domain occupies 3–204; it reads VFGLSGGAGS…AGRHRFRVAR (202 aa). 11 to 16 is an ATP binding site; it reads GSGKST.

Belongs to the CoaE family.

It localises to the cytoplasm. The catalysed reaction is 3'-dephospho-CoA + ATP = ADP + CoA + H(+). It functions in the pathway cofactor biosynthesis; coenzyme A biosynthesis; CoA from (R)-pantothenate: step 5/5. Catalyzes the phosphorylation of the 3'-hydroxyl group of dephosphocoenzyme A to form coenzyme A. This chain is Dephospho-CoA kinase, found in Anaplasma marginale (strain St. Maries).